A 610-amino-acid chain; its full sequence is Putative protein tag-250 (610 aa).

Tudor domains lie at 149 to 260 (VALK…LLPP) and 386 to 506 (MPMS…KIGG).

The sequence is that of Putative protein tag-250 (tag-250) from Caenorhabditis elegans.